Consider the following 229-residue polypeptide: NAD(P)H-quinone oxidoreductase subunit K, chloroplastic (229 aa).

Residues Cys43, Cys44, Cys108, and Cys139 each contribute to the [4Fe-4S] cluster site.

This sequence belongs to the complex I 20 kDa subunit family. In terms of assembly, NDH is composed of at least 16 different subunits, 5 of which are encoded in the nucleus. The cofactor is [4Fe-4S] cluster.

It is found in the plastid. The protein resides in the chloroplast thylakoid membrane. It catalyses the reaction a plastoquinone + NADH + (n+1) H(+)(in) = a plastoquinol + NAD(+) + n H(+)(out). The catalysed reaction is a plastoquinone + NADPH + (n+1) H(+)(in) = a plastoquinol + NADP(+) + n H(+)(out). Its function is as follows. NDH shuttles electrons from NAD(P)H:plastoquinone, via FMN and iron-sulfur (Fe-S) centers, to quinones in the photosynthetic chain and possibly in a chloroplast respiratory chain. The immediate electron acceptor for the enzyme in this species is believed to be plastoquinone. Couples the redox reaction to proton translocation, and thus conserves the redox energy in a proton gradient. This Aethionema grandiflorum (Persian stone-cress) protein is NAD(P)H-quinone oxidoreductase subunit K, chloroplastic.